Here is a 701-residue protein sequence, read N- to C-terminus: Octapeptide-repeat antigen (701 aa).

Asn40, Asn41, Asn76, Asn111, Asn127, Asn139, Asn181, Asn189, Asn311, Asn334, Asn344, Asn477, and Asn557 each carry an N-linked (GlcNAc...) asparagine glycan. Residues 120 to 140 form a disordered region; sequence IENEEKSNGSRKSSNKQKYNE. The segment at 641 to 701 is disordered; the sequence is LSGSSTGSMN…IKSGSKDHIK (61 aa). The segment covering 642 to 655 has biased composition (low complexity); it reads SGSSTGSMNNGKSG. Repeat copies occupy residues 653-660, 661-668, 669-676, 677-684, 685-692, and 693-700. The 6 X 8 AA approximate tandem repeats stretch occupies residues 653–700; sequence KSGSKSDIKGGSKDDIKSGSKDDIKSGSKADIKSGSKDDIKSGSKDHI. The segment covering 656-701 has biased composition (basic and acidic residues); it reads SKSDIKGGSKDDIKSGSKDDIKSGSKADIKSGSKDDIKSGSKDHIK.

Belongs to the ATP-dependent AMP-binding enzyme family.

Its subcellular location is the parasitophorous vacuole. This chain is Octapeptide-repeat antigen, found in Plasmodium falciparum (isolate NF7 / Ghana).